Here is a 629-residue protein sequence, read N- to C-terminus: Probable potassium transport system protein Kup 3 (629 aa).

Helical transmembrane passes span 20-40 (LSLSALGIVYGDIGTSPLYTF), 61-81 (VSLIIWTLIIIASVKYISFAL), 106-126 (PFIIAVGLMGAALIYGDGTIT), 143-163 (PSLKYYVLPIAITILITLFAI), 171-191 (IGKAFGPVMAFWFLTIGILGA), 212-232 (FLFSNGATGFFILCGVFLCVT), 253-273 (WFGLAFPSLIFNYLGQAALVL), 291-311 (FLLPLIILSTVATIIASQAII), 343-363 (IYIGVVNWFLMLATLGLTIGF), 372-392 (AYGIAVSATMLCTTVLLFIAL), 400-420 (IITSGLVAGLFMIVDASFFAA), and 425-445 (FINGGYIPITLAIIIYSMMYI).

This sequence belongs to the HAK/KUP transporter (TC 2.A.72) family.

Its subcellular location is the cell inner membrane. It catalyses the reaction K(+)(in) + H(+)(in) = K(+)(out) + H(+)(out). In terms of biological role, transport of potassium into the cell. Likely operates as a K(+):H(+) symporter. The polypeptide is Probable potassium transport system protein Kup 3 (Legionella pneumophila (strain Lens)).